The chain runs to 201 residues: MTSTLHRTPLATAGLALVVALGGCGGGGGDSRETPPYVPKATTVDATTPAPAAEPLTIASPMFADGAPIPVQFSCKGANVAPPLTWSSPAGAAELALVVDDPDAVGGLYVHWIVTGIAPGSGSTADGQTPAGGHSVPNSGGRQGYFGPCPPAGTGTHHYRFTLYHLPVALQLPPGATGVQAAQAIAQAASGQARLVGTFEG.

Positions 1–23 (MTSTLHRTPLATAGLALVVALGG) are cleaved as a signal peptide. Residue C24 is the site of N-palmitoyl cysteine attachment. Residue C24 is the site of S-diacylglycerol cysteine attachment. Prevents bacterial uptake by a human macrophage-like cell line regions lie at residues 77 to 96 (GANVAPPLTWSSPAGAAELA), 97 to 116 (LVVDDPDAVGGLYVHWIVTG), and 117 to 136 (IAPGSGSTADGQTPAGGHSV). The disordered stretch occupies residues 122–141 (GSTADGQTPAGGHSVPNSGG).

The protein belongs to the UPF0098 family.

It is found in the cell membrane. It localises to the cell surface. Its function is as follows. Probably involved in bacterial recognition and uptake by its host (human). In Mycobacterium tuberculosis (strain ATCC 25618 / H37Rv), this protein is Putative lipoprotein LppC.